Consider the following 833-residue polypeptide: Piwi-like protein 2 (833 aa).

A PAZ domain is found at 227-353; sequence RINRVLNDNS…IPGELCFLCG (127 aa). Residues 313–338 form a disordered region; it reads PMRRERKKKDEEGVEKEKEKEAPEEK. Over residues 320 to 338 the composition is skewed to basic and acidic residues; the sequence is KKDEEGVEKEKEKEAPEEK. Positions 515-815 constitute a Piwi domain; that stretch reads KMALVFVPDD…LAELVGKVHK (301 aa).

Belongs to the argonaute family. Piwi subfamily. As to expression, expressed in dividing adult stem cells.

Required for the production of functional progeny from adult somatic stem cells (neoblasts). The chain is Piwi-like protein 2 (wi-2) from Schmidtea mediterranea (Freshwater planarian flatworm).